We begin with the raw amino-acid sequence, 279 residues long: Pantothenate synthetase (279 aa).

26 to 33 (MGNLHEGH) contacts ATP. His33 acts as the Proton donor in catalysis. Residue Gln57 coordinates (R)-pantoate. Gln57 lines the beta-alanine pocket. An ATP-binding site is contributed by 144 to 147 (GKKD). Gln150 is a (R)-pantoate binding site. ATP is bound by residues Val173 and 181 to 184 (LSSR).

The protein belongs to the pantothenate synthetase family. Homodimer.

The protein resides in the cytoplasm. The catalysed reaction is (R)-pantoate + beta-alanine + ATP = (R)-pantothenate + AMP + diphosphate + H(+). Its pathway is cofactor biosynthesis; (R)-pantothenate biosynthesis; (R)-pantothenate from (R)-pantoate and beta-alanine: step 1/1. In terms of biological role, catalyzes the condensation of pantoate with beta-alanine in an ATP-dependent reaction via a pantoyl-adenylate intermediate. The protein is Pantothenate synthetase of Burkholderia thailandensis (strain ATCC 700388 / DSM 13276 / CCUG 48851 / CIP 106301 / E264).